The chain runs to 251 residues: CDP-diacylglycerol pyrophosphatase (251 aa).

A helical transmembrane segment spans residues 4–24; sequence AGLLFLVMIVIAVVATGIGYW.

It belongs to the Cdh family.

It localises to the cell inner membrane. The enzyme catalyses a CDP-1,2-diacyl-sn-glycerol + H2O = a 1,2-diacyl-sn-glycero-3-phosphate + CMP + 2 H(+). It functions in the pathway phospholipid metabolism; CDP-diacylglycerol degradation; phosphatidate from CDP-diacylglycerol: step 1/1. This chain is CDP-diacylglycerol pyrophosphatase, found in Escherichia coli O45:K1 (strain S88 / ExPEC).